Consider the following 614-residue polypeptide: UvrABC system protein C (614 aa).

In terms of domain architecture, GIY-YIG spans 26–104; that stretch reads NLPGVYKMLG…IKEYRPPYNV (79 aa). Positions 215-250 constitute a UVR domain; it reads SDIHSALIEKMEASAEELDFEKAVFYRDQLSMLREV.

It belongs to the UvrC family. As to quaternary structure, interacts with UvrB in an incision complex.

The protein localises to the cytoplasm. The UvrABC repair system catalyzes the recognition and processing of DNA lesions. UvrC both incises the 5' and 3' sides of the lesion. The N-terminal half is responsible for the 3' incision and the C-terminal half is responsible for the 5' incision. This chain is UvrABC system protein C, found in Psychrobacter arcticus (strain DSM 17307 / VKM B-2377 / 273-4).